The primary structure comprises 497 residues: Endoglucanase 17 (497 aa).

Residues 1–21 form the signal peptide; the sequence is MAAAGGAVLLLVLATATSVTG. Catalysis depends on Asp77, which acts as the Nucleophile. Residue His406 is part of the active site. Asn451 carries an N-linked (GlcNAc...) asparagine glycan. Catalysis depends on residues Asp458 and Glu467.

It belongs to the glycosyl hydrolase 9 (cellulase E) family.

The protein resides in the secreted. It carries out the reaction Endohydrolysis of (1-&gt;4)-beta-D-glucosidic linkages in cellulose, lichenin and cereal beta-D-glucans.. This chain is Endoglucanase 17 (GLU13), found in Oryza sativa subsp. japonica (Rice).